A 141-amino-acid chain; its full sequence is Hemoglobin subunit alpha-D (141 aa).

Residues 1 to 141 (MLTADDKKLL…VAAVLAEKYR (141 aa)) enclose the Globin domain. Histidine 58 and histidine 87 together coordinate heme b.

The protein belongs to the globin family. Heterotetramer of two alpha-D chains and two beta chains. As to expression, red blood cells.

In terms of biological role, involved in oxygen transport from the lung to the various peripheral tissues. The protein is Hemoglobin subunit alpha-D (HBAD) of Chloephaga melanoptera (Andean goose).